The primary structure comprises 302 residues: Sulfotransferase 1C4 (302 aa).

Residue 55 to 60 (KAGTTW) participates in 3'-phosphoadenylyl sulfate binding. 113–115 (KTH) serves as a coordination point for substrate. His115 (proton acceptor) is an active-site residue. 3'-phosphoadenylyl sulfate contacts are provided by residues Arg137, Ser145, Tyr200, 234 to 239 (TSFDVM), and 262 to 266 (FMRKG).

This sequence belongs to the sulfotransferase 1 family. In terms of tissue distribution, expressed at high levels in fetal lung and kidney and at low levels in fetal heart, adult kidney, ovary and spinal cord.

Its subcellular location is the cytoplasm. The protein resides in the cytosol. The catalysed reaction is a phenol + 3'-phosphoadenylyl sulfate = an aryl sulfate + adenosine 3',5'-bisphosphate + H(+). It carries out the reaction 17beta-estradiol + 3'-phosphoadenylyl sulfate = 17beta-estradiol 3-sulfate + adenosine 3',5'-bisphosphate + H(+). The enzyme catalyses bisphenol A + 3'-phosphoadenylyl sulfate = bisphenyl A sulfate + adenosine 3',5'-bisphosphate + H(+). Sulfotransferase that utilizes 3'-phospho-5'-adenylyl sulfate (PAPS) as sulfonate donor to catalyze the sulfate conjugation of phenolic compounds. Can also sulfonate estrogenic compounds, however, the dietary flavonoids (phytoestrogen) and environmental estrogens, like bisphenol A are better substrates than 17beta-estradiol (E2). Mediates the sulfation of doxorubicin and its analog epirubicin, two antitumor anthracyclines. The chain is Sulfotransferase 1C4 from Homo sapiens (Human).